Consider the following 254-residue polypeptide: Probable septum site-determining protein MinC (254 aa).

Belongs to the MinC family. In terms of assembly, interacts with MinD and FtsZ.

Functionally, cell division inhibitor that blocks the formation of polar Z ring septums. Rapidly oscillates between the poles of the cell to destabilize FtsZ filaments that have formed before they mature into polar Z rings. Prevents FtsZ polymerization. The polypeptide is Probable septum site-determining protein MinC (Burkholderia ambifaria (strain ATCC BAA-244 / DSM 16087 / CCUG 44356 / LMG 19182 / AMMD) (Burkholderia cepacia (strain AMMD))).